The following is a 262-amino-acid chain: Lysine 5,6-aminomutase beta subunit (262 aa).

In terms of domain architecture, B12-binding spans K120–S262. Adenosylcob(III)alamin is bound by residues T130 to G136 and H133. Residue K144 is modified to N6-(pyridoxal phosphate)lysine. Adenosylcob(III)alamin is bound by residues L185–Q192, L219–P223, and F239–F244.

Belongs to the KamE family. In terms of assembly, heterotetramer of 2 alpha and 2 beta subunits. Requires adenosylcob(III)alamin as cofactor. Pyridoxal 5'-phosphate serves as cofactor.

It carries out the reaction (3S)-3,6-diaminohexanoate = (3S,5S)-3,5-diaminohexanoate. It catalyses the reaction D-lysine = (2R,5S)-2,5-diaminohexanoate. It participates in amino-acid metabolism; lysine degradation. With respect to regulation, rapidly inactivated in the presence of D-lysine and to a lesser extent in the absence of adenosylcobalamin (Adocbl). Activity is stable in the presence of Adocbl when D-lysine is absent. Adocbl imparts thermal stability at 37 degrees Celsius. Functionally, catalyzes the migration of the L-beta-lysine and D-lysine epsilon amino group to the delta carbon to produce 3,5-diaminohexanoate and 2,5-diaminohexanoate, respectively. This Acetoanaerobium sticklandii (strain ATCC 12662 / DSM 519 / JCM 1433 / CCUG 9281 / NCIMB 10654 / HF) (Clostridium sticklandii) protein is Lysine 5,6-aminomutase beta subunit (kamE).